The primary structure comprises 56 residues: Small ribosomal subunit protein uS14 (56 aa).

C21, C24, C39, and C42 together coordinate Zn(2+).

This sequence belongs to the universal ribosomal protein uS14 family. The cofactor is Zn(2+).

The chain is Small ribosomal subunit protein uS14 (RPS29) from Eremothecium gossypii (strain ATCC 10895 / CBS 109.51 / FGSC 9923 / NRRL Y-1056) (Yeast).